We begin with the raw amino-acid sequence, 343 residues long: Heat-inducible transcription repressor HrcA (343 aa).

It belongs to the HrcA family.

Negative regulator of class I heat shock genes (grpE-dnaK-dnaJ and groELS operons). Prevents heat-shock induction of these operons. The chain is Heat-inducible transcription repressor HrcA from Mycobacterium leprae (strain Br4923).